Here is a 527-residue protein sequence, read N- to C-terminus: Matrix metalloproteinase-19 (527 aa).

A signal peptide spans 1 to 18 (MDWQQLWLAFLLPMTVSG). Residues 19 to 98 (RALGPTEKEA…EDPFNQKSLK (80 aa)) constitute a propeptide that is removed on maturation. The Cysteine switch motif lies at 84–91 (PRCGLEDP). C86 is a Zn(2+) binding site. A glycan (N-linked (GlcNAc...) asparagine) is linked at N109. Position 213 (H213) interacts with Zn(2+). The active site involves E214. Zn(2+) contacts are provided by H217 and H223. Hemopexin repeat units follow at residues 286–333 (PNPC…WEGL), 334–372 (PGNL…FPMK), 377–425 (EPNL…FTGV), and 426–471 (PDRP…WMHC). C289 and C471 are disulfide-bonded. Residues N464 and N479 are each glycosylated (N-linked (GlcNAc...) asparagine). The disordered stretch occupies residues 473–500 (SQTPDTNSSTGDVTPSTTDTVLGTTPST). D512 carries GPI-anchor amidated aspartate lipidation. Residues 513–527 (SASLSFSANVTLLGA) constitute a propeptide, removed in mature form. A glycan (N-linked (GlcNAc...) asparagine) is linked at N521.

This sequence belongs to the peptidase M10A family. It depends on Zn(2+) as a cofactor. Requires Ca(2+) as cofactor. In terms of processing, activated by autolytic cleavage after Lys-98. Tyrosine phosphorylated by PKDCC/VLK. As to expression, highly expressed in the liver. Expressed in the arterial tunica media of large blood vessels.

The protein resides in the cell membrane. Its subcellular location is the secreted. It localises to the extracellular space. The protein localises to the extracellular matrix. Endopeptidase that degrades various components of the extracellular matrix, such as aggrecan and cartilage oligomeric matrix protein (comp), during development, haemostasis and pathological conditions (arthritic disease). May also play a role in neovascularization or angiogenesis. Hydrolyzes collagen type IV, laminin, nidogen, nascin-C isoform, fibronectin, and type I gelatin. The polypeptide is Matrix metalloproteinase-19 (Mmp19) (Mus musculus (Mouse)).